A 345-amino-acid chain; its full sequence is Ribosomal RNA large subunit methyltransferase F (345 aa).

Over residues 1–14 (MTSKPMTRRPTANN) the composition is skewed to polar residues. 2 disordered regions span residues 1–35 (MTSKPMTRRPTANNHRNRSPETAKKLGQLHPRNPH) and 225–258 (EANSRKQHNLQRHRGKNENEQISRSSTKSGNAAQ). Residues 229-239 (RKQHNLQRHRG) show a composition bias toward basic residues. Residues 246–258 (ISRSSTKSGNAAQ) are compositionally biased toward polar residues.

This sequence belongs to the methyltransferase superfamily. METTL16/RlmF family.

Its subcellular location is the cytoplasm. It carries out the reaction adenosine(1618) in 23S rRNA + S-adenosyl-L-methionine = N(6)-methyladenosine(1618) in 23S rRNA + S-adenosyl-L-homocysteine + H(+). Its function is as follows. Specifically methylates the adenine in position 1618 of 23S rRNA. In Psychrobacter arcticus (strain DSM 17307 / VKM B-2377 / 273-4), this protein is Ribosomal RNA large subunit methyltransferase F.